A 1071-amino-acid polypeptide reads, in one-letter code: SLIT-ROBO Rho GTPase-activating protein 2 (1071 aa).

The 304-residue stretch at 22–325 (KEIRAQLTEQ…AVENLDATSD (304 aa)) folds into the F-BAR domain. A compositionally biased stretch (basic and acidic residues) spans 181-203 (LKEAEKQEEKQIGKSVKQEDRQT). Residues 181-211 (LKEAEKQEEKQIGKSVKQEDRQTPRSPDSTA) are disordered. S206 carries the post-translational modification Phosphoserine. Positions 363 to 401 (QSELVQRRQQLQSRLSTLKIENEEVKKTMEATLQTIQDI) form a coiled coil. A phosphoserine mark is found at S427, S500, S691, S695, and S724. Residues 489–679 (ARRSSTVRKQ…TIIIQHENIF (191 aa)) form the Rho-GAP domain. The tract at residues 703 to 726 (THGETISAEDSTQDVTAEHHTSDD) is disordered. In terms of domain architecture, SH3 spans 728–787 (CEPIEAIAKFDYVGRTARELSFKKGASLLLYQRASDDWWEGRHNGIDGLIPHQYIVVQDT). Disordered regions lie at residues 794-820 (RSSP…GASC) and 835-936 (NKQR…NHRP). Residue S795 is modified to Phosphoserine. 3 stretches are compositionally biased toward polar residues: residues 857-867 (LGSSLTDSSSP), 874-885 (RPSSQPIMSQNL), and 897-907 (GHGSLNSISRH). Phosphoserine is present on S916. A compositionally biased stretch (polar residues) spans 919–933 (IRKTATAGRSKSFNN). R927 is modified (symmetric dimethylarginine; by PRMT5). S930 is modified (phosphoserine). Residues 940–968 (EVIAQDIEATMNSALNELQELERQSSAKH) are a coiled coil. Residues 983 to 1012 (SPVVAPTSEPSSPLHTQLLKDPEPAFQRSA) are disordered. Phosphoserine occurs at positions 990, 994, 1013, and 1027. Residues 1029–1071 (KMAAPVKPPATRPKPTVFPKTNATSPGVNSSASPQSTDKSCTV) are disordered. A compositionally biased stretch (polar residues) spans 1047 to 1071 (PKTNATSPGVNSSASPQSTDKSCTV).

Homodimer. Forms a heterooligomer with SRGAP1 and SRGAP3 through its F-BAR domain. Interacts (via SH3 domain) with GPHN. Interacts (via SH3 domain) with FMNL1 (activated by RAC1); regulates the actin filament severing activity of FMNL1 and actin dynamics. Interacts (via SH3 domain) with FMNL3. Interacts with RAC1; specifically stimulates RAC1 GTPase activity. Interacts (via F-BAR domain) with HOMER1. Interacts with ROBO1 and ROBO2. Interacts with FASLG. Interacts with PRMT5. Methylation at Arg-927 is required for the stimulation of cell migration, dimerization and localization at the plasma membrane protrusions.

It localises to the cell membrane. It is found in the cell projection. The protein localises to the dendritic spine. Its subcellular location is the postsynaptic density. The protein resides in the postsynaptic cell membrane. It localises to the lamellipodium. It is found in the cytoplasmic vesicle. The protein localises to the phagosome. Its subcellular location is the nucleus. The protein resides in the cytoplasm. It localises to the cytosol. Its function is as follows. Postsynaptic RAC1 GTPase activating protein (GAP) that plays a key role in neuronal morphogenesis and migration mainly during development of the cerebral cortex. Regulates excitatory and inhibitory synapse maturation and density in cortical pyramidal neurons. SRGAP2/SRGAP2A limits excitatory and inhibitory synapse density through its RAC1-specific GTPase activating activity, while it promotes maturation of both excitatory and inhibitory synapses through its ability to bind to the postsynaptic scaffolding protein HOMER1 at excitatory synapses, and the postsynaptic protein GPHN at inhibitory synapses. Mechanistically, acts by binding and deforming membranes, thereby regulating actin dynamics to regulate cell migration and differentiation. Promotes cell repulsion and contact inhibition of locomotion: localizes to protrusions with curved edges and controls the duration of RAC1 activity in contact protrusions. In non-neuronal cells, may also play a role in cell migration by regulating the formation of lamellipodia and filopodia. This chain is SLIT-ROBO Rho GTPase-activating protein 2, found in Rattus norvegicus (Rat).